Here is a 161-residue protein sequence, read N- to C-terminus: Phosphopantetheine adenylyltransferase (161 aa).

Residue S8 participates in substrate binding. ATP contacts are provided by residues 8-9 (SF) and H16. Substrate contacts are provided by K40, T72, and R86. ATP contacts are provided by residues 87 to 89 (GLR), E97, and 122 to 128 (HSFLSSS).

It belongs to the bacterial CoaD family. In terms of assembly, homohexamer. Mg(2+) is required as a cofactor.

Its subcellular location is the cytoplasm. It catalyses the reaction (R)-4'-phosphopantetheine + ATP + H(+) = 3'-dephospho-CoA + diphosphate. It participates in cofactor biosynthesis; coenzyme A biosynthesis; CoA from (R)-pantothenate: step 4/5. In terms of biological role, reversibly transfers an adenylyl group from ATP to 4'-phosphopantetheine, yielding dephospho-CoA (dPCoA) and pyrophosphate. This is Phosphopantetheine adenylyltransferase from Prochlorococcus marinus (strain SARG / CCMP1375 / SS120).